A 267-amino-acid polypeptide reads, in one-letter code: MLPFVLVLLVATSALAAPSVVISQDNINNIAPRVGNGRPISSALIDRAFEIVDGGDTNIYILTIQQILNDLADQPDGLSQSLAVTQAVAALGELATGVPGNSCEAAAVIDAYANSVRTGDNSALSIAVANYINRLSSNIGLISQLASNPDSLRYSSGPAGNCAGGGRSYQFEAAWDAVLNNANPYQIGLINEEYCAARRLYNAFNSRSNNVGAAITAGAVVAQTQAAQIILPSLVNVLSAVAAGGNVAGAAAQAGQALANAAANVQL.

The signal sequence occupies residues 1–16 (MLPFVLVLLVATSALA). Position 19 is an N-acetylserine; in short form (Ser-19). The cysteines at positions 103 and 162 are disulfide-linked.

As to quaternary structure, silk fibroin elementary unit consists in a disulfide-linked heavy and light chain and a p25 glycoprotein in molar ratios of 6:6:1. This results in a complex of approximately 2.3 MDa. In terms of processing, partially N-terminally processed to yield a short form which lacks the first two residues of the long form. Post-translationally, the interchain disulfide bridge is essential for the intracellular transport and secretion of fibroin. Produced exclusively in the posterior (PSG) section of silk glands, which are essentially modified salivary glands.

The protein localises to the secreted. In terms of biological role, it is likely that the major role of L-chain is to prevent the retention of H-chain in ER by forming the disulfide linkage. The sequence is that of Fibroin light chain (FIBL) from Galleria mellonella (Greater wax moth).